A 299-amino-acid polypeptide reads, in one-letter code: Nicotinate-nucleotide pyrophosphorylase [carboxylating] (299 aa).

Residues 8-12 are important for hexamer formation; sequence FLLPP. Quinolinate-binding positions include Arg-102, 138 to 139, 160 to 161, Lys-171, Glu-201, Asp-222, 248 to 250, and Gly-270; these read RK, HR, and SGG.

It belongs to the NadC/ModD family. In terms of assembly, hexamer formed by 3 homodimers.

It carries out the reaction nicotinate beta-D-ribonucleotide + CO2 + diphosphate = quinolinate + 5-phospho-alpha-D-ribose 1-diphosphate + 2 H(+). It participates in cofactor biosynthesis; NAD(+) biosynthesis; nicotinate D-ribonucleotide from quinolinate: step 1/1. In terms of biological role, involved in the catabolism of quinolinic acid (QA). This is Nicotinate-nucleotide pyrophosphorylase [carboxylating] (Qprt) from Rattus norvegicus (Rat).